The chain runs to 227 residues: Transcription antitermination protein NusB (227 aa).

Disordered regions lie at residues 165–189 and 201–227; these read ASES…SDED and AEET…ADES. Composition is skewed to acidic residues over residues 178–189 and 201–214; these read DDSDALDDSDED and AEET…AEDS. A compositionally biased stretch (basic and acidic residues) spans 215–227; sequence EVSKVSEEKADES.

Belongs to the NusB family.

In terms of biological role, involved in transcription antitermination. Required for transcription of ribosomal RNA (rRNA) genes. Binds specifically to the boxA antiterminator sequence of the ribosomal RNA (rrn) operons. This is Transcription antitermination protein NusB from Corynebacterium glutamicum (strain ATCC 13032 / DSM 20300 / JCM 1318 / BCRC 11384 / CCUG 27702 / LMG 3730 / NBRC 12168 / NCIMB 10025 / NRRL B-2784 / 534).